The chain runs to 432 residues: Testis-specific Y-encoded-like protein 1 (432 aa).

3 disordered regions span residues M1–S31, A54–A110, and T116–E135. Residue K160 forms a Glycyl lysine isopeptide (Lys-Gly) (interchain with G-Cter in SUMO2) linkage.

The protein belongs to the nucleosome assembly protein (NAP) family. Ubiquitinated by the CRL2(APPBP2) complex, which recognizes the Arg-Xaa-Xaa-Gly sequence at the C-terminus, leading to its degradation.

Its subcellular location is the nucleus. The protein localises to the nucleolus. This Bos taurus (Bovine) protein is Testis-specific Y-encoded-like protein 1 (TSPYL1).